Here is a 333-residue protein sequence, read N- to C-terminus: NADH-quinone oxidoreductase subunit H (333 aa).

8 consecutive transmembrane segments (helical) span residues 15–35, 88–108, 117–137, 159–179, 191–211, 239–259, 274–296, and 313–333; these read FFIFFGLAVLLLFAVLGFVTY, FILAPVIAFAPAFMVLAVIPF, IGVGLLYYIAVSGITTIGVVT, ISYEIPLVMSVIGIVLLAGSL, VWYIFVQPVGFVVFLIAAVAE, WAFFMLSEYVYFFGMASLITV, IPGAVWFALKFSSVVFLLIWFRV, and VLLPIALANIFLTALIKELFF.

The protein belongs to the complex I subunit 1 family. NDH-1 is composed of 14 different subunits. Subunits NuoA, H, J, K, L, M, N constitute the membrane sector of the complex.

Its subcellular location is the cell membrane. It carries out the reaction a quinone + NADH + 5 H(+)(in) = a quinol + NAD(+) + 4 H(+)(out). In terms of biological role, NDH-1 shuttles electrons from NADH, via FMN and iron-sulfur (Fe-S) centers, to quinones in the respiratory chain. The immediate electron acceptor for the enzyme in this species is believed to be ubiquinone. Couples the redox reaction to proton translocation (for every two electrons transferred, four hydrogen ions are translocated across the cytoplasmic membrane), and thus conserves the redox energy in a proton gradient. This subunit may bind ubiquinone. The sequence is that of NADH-quinone oxidoreductase subunit H from Bacillus thuringiensis subsp. konkukian (strain 97-27).